The chain runs to 282 residues: Armadillo repeat-containing protein 1 (282 aa).

Methionine 1 is modified (N-acetylmethionine). One copy of the ARM repeat lies at 39-81 (GCLPGLILFMDHPNPPVVHSALLALRYLAECRANREKMKGELG). Threonine 137 carries the phosphothreonine modification. Phosphoserine occurs at positions 189, 246, 260, and 267. The tract at residues 239–261 (DYLPEDESPTKEQDKAVSRVGSH) is disordered. Basic and acidic residues predominate over residues 246 to 255 (SPTKEQDKAV).

As to quaternary structure, interacts with mitochondrial contact site and cristae organizing system (MICOS) complex components IMMT/MIC60 and MICOS10/MIC10. Interacts with mitochondrial outer membrane sorting assembly machinery (SAM) complex components SAMM50 and MTX1.

The protein localises to the cytoplasm. It localises to the mitochondrion. The protein resides in the mitochondrion outer membrane. Functionally, in association with mitochondrial contact site and cristae organizing system (MICOS) complex components and mitochondrial outer membrane sorting assembly machinery (SAM) complex components may regulate mitochondrial dynamics playing a role in determining mitochondrial length, distribution and motility. The protein is Armadillo repeat-containing protein 1 (Armc1) of Mus musculus (Mouse).